Consider the following 177-residue polypeptide: MTLVLILIFIIAWKLGYLKNTLKNWDLKRIFWLMGIVFFTLATNYLVTVLVLKTQIISSVTSDTGMSDILGQLPILCQKYILGIIVPLSEELLFRSYIFGSITNKKVAFLISSVLFALVHTGFSWYLLPYLILSFIITWVYSKRNNFIESAIVHSSVNLFGGSAIKLLDTFFKLLPY.

4 helical membrane-spanning segments follow: residues 2-22, 30-50, 117-137, and 152-172; these read TLVL…KNTL, IFWL…VTVL, ALVH…SFII, and IVHS…DTFF.

This sequence belongs to the UPF0177 family.

It localises to the cell membrane. The protein is UPF0177 protein YxdF (yxdF) of Lactococcus lactis subsp. lactis (strain IL1403) (Streptococcus lactis).